The primary structure comprises 147 residues: Large ribosomal subunit protein bL9 (147 aa).

It belongs to the bacterial ribosomal protein bL9 family.

Binds to the 23S rRNA. The polypeptide is Large ribosomal subunit protein bL9 (Campylobacter hominis (strain ATCC BAA-381 / DSM 21671 / CCUG 45161 / LMG 19568 / NCTC 13146 / CH001A)).